Reading from the N-terminus, the 146-residue chain is 3-hydroxyacyl-[acyl-carrier-protein] dehydratase FabZ (146 aa).

The active site involves H47.

Belongs to the thioester dehydratase family. FabZ subfamily.

Its subcellular location is the cytoplasm. The enzyme catalyses a (3R)-hydroxyacyl-[ACP] = a (2E)-enoyl-[ACP] + H2O. Functionally, involved in unsaturated fatty acids biosynthesis. Catalyzes the dehydration of short chain beta-hydroxyacyl-ACPs and long chain saturated and unsaturated beta-hydroxyacyl-ACPs. The chain is 3-hydroxyacyl-[acyl-carrier-protein] dehydratase FabZ from Methylococcus capsulatus (strain ATCC 33009 / NCIMB 11132 / Bath).